The chain runs to 371 residues: Chemerin-like receptor 1 (371 aa).

At 1 to 39 the chain is on the extracellular side; sequence MEYDAYNDSGIYDDEYSDGFGYFVDLEEASPWEAKVAPV. Asn7 carries an N-linked (GlcNAc...) asparagine glycan. The chain crosses the membrane as a helical span at residues 40–62; the sequence is FLVVIYSLVCFLGLLGNGLVIVI. The Cytoplasmic segment spans residues 63 to 73; sequence ATFKMKKTVNT. Residues 74–95 traverse the membrane as a helical segment; that stretch reads VWFVNLAVADFLFNIFLPMHIT. Residues 96–112 are Extracellular-facing; it reads YAAMDYHWVFGKAMCKI. The cysteines at positions 110 and 187 are disulfide-linked. A helical membrane pass occupies residues 113 to 133; that stretch reads SNFLLSHNMYTSVFLLTVISF. The Cytoplasmic segment spans residues 134–152; the sequence is DRCISVLLPVWSQNHRSIR. A helical membrane pass occupies residues 153–174; sequence LAYMTCSAVWVLAFFLSSPSLV. Residues 175-222 are Extracellular-facing; the sequence is FRDTANIHGKITCFNNFSLAAPESSPHPAHSQVVSTGYSRHVAVTVTR. Asn190 is a glycosylation site (N-linked (GlcNAc...) asparagine). Residues 223 to 243 form a helical membrane-spanning segment; that stretch reads FLCGFLIPVFIITACYLTIVF. Residues 244–259 lie on the Cytoplasmic side of the membrane; sequence KLQRNRLAKNKKPFKI. A helical transmembrane segment spans residues 260–280; it reads IITIIITFFLCWCPYHTLYLL. Residues 281-298 are Extracellular-facing; the sequence is ELHHTAVPSSVFSLGLPL. The chain crosses the membrane as a helical span at residues 299–318; that stretch reads ATAVAIANSCMNPILYVFMG. Residues 319-371 are Cytoplasmic-facing; sequence HDFRKFKVALFSRLANALSEDTGPSSYPSHRSFTKMSSLNEKASVNEKETSTL. Phosphoserine is present on Ser337. Phosphothreonine is present on Thr340. A phosphoserine mark is found at Ser347, Ser350, and Ser356. Thr370 bears the Phosphothreonine mark.

Belongs to the chemokine-like receptor (CMKLR) family. In terms of tissue distribution, expressed in the differentiated adipocytes (at protein level). Ubiquitous. Highly expressed in adipose tissue and immature plasmacytoid dendritic cells (DCs) and at lower levels in myeloid DCs, macrophages, and NK cells. Expressed on macrophages isolated from different tissues, including peritoneal cavities, pleural cavities and spleen.

The protein localises to the cell membrane. Its function is as follows. Receptor for the chemoattractant adipokine chemerin/RARRES2 and for the omega-3 fatty acid derived molecule resolvin E1. Interaction with RARRES2 initiates activation of G proteins G(i)/G(o) and beta-arrestin pathways inducing cellular responses via second messenger pathways such as intracellular calcium mobilization, phosphorylation of MAP kinases MAPK1/MAPK3 (ERK1/2), TYRO3, MAPK14/P38MAPK and PI3K leading to multifunctional effects, like, reduction of immune responses, enhancing of adipogenesis and angionesis. Resolvin E1 down-regulates cytokine production in macrophages by reducing the activation of MAPK1/3 (ERK1/2) and NF-kappa-B. Positively regulates adipogenesis and adipocyte metabolism. The sequence is that of Chemerin-like receptor 1 (Cmklr1) from Mus musculus (Mouse).